A 65-amino-acid chain; its full sequence is Large ribosomal subunit protein bL35 (65 aa).

Positions 24–48 (RRKAGKSHLLEHKSSDKKRSMSKTT) are disordered. Positions 31–42 (HLLEHKSSDKKR) are enriched in basic and acidic residues.

The protein belongs to the bacterial ribosomal protein bL35 family.

The protein is Large ribosomal subunit protein bL35 of Nostoc punctiforme (strain ATCC 29133 / PCC 73102).